Reading from the N-terminus, the 106-residue chain is Nucleoid-associated protein DIP0260 (106 aa).

It belongs to the YbaB/EbfC family. In terms of assembly, homodimer.

The protein localises to the cytoplasm. It is found in the nucleoid. Binds to DNA and alters its conformation. May be involved in regulation of gene expression, nucleoid organization and DNA protection. This is Nucleoid-associated protein DIP0260 from Corynebacterium diphtheriae (strain ATCC 700971 / NCTC 13129 / Biotype gravis).